A 438-amino-acid chain; its full sequence is Protein phosphatase 2C homolog 2 (438 aa).

The region spanning 23–294 (IYGVSAMQGW…DNMTMVIIGF (272 aa)) is the PPM-type phosphatase domain. 4 residues coordinate Mn(2+): aspartate 67, glycine 68, aspartate 236, and aspartate 285. The disordered stretch occupies residues 370–438 (VLTGSDDTEM…EKTPEESKKD (69 aa)). Acidic residues predominate over residues 375–387 (DDTEMFDNADEDK). Basic and acidic residues predominate over residues 398 to 438 (GKTDAKEETEAKPAPEAESSKPADGSEKKQDEKTPEESKKD).

It belongs to the PP2C family. Mg(2+) serves as cofactor. The cofactor is Mn(2+).

Its subcellular location is the cytoplasm. It localises to the nucleus. The catalysed reaction is O-phospho-L-seryl-[protein] + H2O = L-seryl-[protein] + phosphate. It carries out the reaction O-phospho-L-threonyl-[protein] + H2O = L-threonyl-[protein] + phosphate. Functionally, dephosphorylating regulator for many key proteins. Negatively regulates the endoplasmic reticulum unfolded protein response. This Hypocrea jecorina (strain QM6a) (Trichoderma reesei) protein is Protein phosphatase 2C homolog 2.